Reading from the N-terminus, the 268-residue chain is Tryptophan synthase alpha chain (268 aa).

Residues glutamate 40 and aspartate 51 each act as proton acceptor in the active site.

Belongs to the TrpA family. Tetramer of two alpha and two beta chains.

It carries out the reaction (1S,2R)-1-C-(indol-3-yl)glycerol 3-phosphate + L-serine = D-glyceraldehyde 3-phosphate + L-tryptophan + H2O. It functions in the pathway amino-acid biosynthesis; L-tryptophan biosynthesis; L-tryptophan from chorismate: step 5/5. Functionally, the alpha subunit is responsible for the aldol cleavage of indoleglycerol phosphate to indole and glyceraldehyde 3-phosphate. This chain is Tryptophan synthase alpha chain, found in Geobacillus thermodenitrificans (strain NG80-2).